Here is a 134-residue protein sequence, read N- to C-terminus: Ribosome-binding factor A (134 aa).

It belongs to the RbfA family. In terms of assembly, monomer. Binds 30S ribosomal subunits, but not 50S ribosomal subunits or 70S ribosomes.

Its subcellular location is the cytoplasm. In terms of biological role, one of several proteins that assist in the late maturation steps of the functional core of the 30S ribosomal subunit. Associates with free 30S ribosomal subunits (but not with 30S subunits that are part of 70S ribosomes or polysomes). Required for efficient processing of 16S rRNA. May interact with the 5'-terminal helix region of 16S rRNA. The sequence is that of Ribosome-binding factor A from Parasynechococcus marenigrum (strain WH8102).